Reading from the N-terminus, the 239-residue chain is Endoglucanase A (239 aa).

A signal peptide spans 1 to 16; that stretch reads MKLSMTLSLFAATAMG.

The protein belongs to the glycosyl hydrolase 12 (cellulase H) family.

The catalysed reaction is Endohydrolysis of (1-&gt;4)-beta-D-glucosidic linkages in cellulose, lichenin and cereal beta-D-glucans.. In terms of biological role, has carboxylmethylcellulase activity. The sequence is that of Endoglucanase A (cekA) from Aspergillus kawachii (strain NBRC 4308) (White koji mold).